The following is a 90-amino-acid chain: MSRTVFCQNLNKEAEGLGFQLYPGEIGKRIFDNISKEAWTIWQKKQTMLINEKKMNMMNVDDRAFLEAAMVAYLFEGKEPEIEGYVPPSK.

This sequence belongs to the Fe(2+)-trafficking protein family.

Could be a mediator in iron transactions between iron acquisition and iron-requiring processes, such as synthesis and/or repair of Fe-S clusters in biosynthetic enzymes. This Colwellia psychrerythraea (strain 34H / ATCC BAA-681) (Vibrio psychroerythus) protein is Probable Fe(2+)-trafficking protein.